Here is a 175-residue protein sequence, read N- to C-terminus: ATP-dependent protease subunit HslV (175 aa).

The active site involves threonine 2. Residues alanine 159, aspartate 162, and threonine 165 each coordinate Na(+).

It belongs to the peptidase T1B family. HslV subfamily. In terms of assembly, a double ring-shaped homohexamer of HslV is capped on each side by a ring-shaped HslU homohexamer. The assembly of the HslU/HslV complex is dependent on binding of ATP.

The protein localises to the cytoplasm. The catalysed reaction is ATP-dependent cleavage of peptide bonds with broad specificity.. Allosterically activated by HslU binding. Functionally, protease subunit of a proteasome-like degradation complex believed to be a general protein degrading machinery. The polypeptide is ATP-dependent protease subunit HslV (Ligilactobacillus salivarius (strain UCC118) (Lactobacillus salivarius)).